A 194-amino-acid chain; its full sequence is Holliday junction branch migration complex subunit RuvA (194 aa).

A domain I region spans residues 1 to 64 (MISRLTGKLV…EDAHLLFGFA (64 aa)). The tract at residues 65-143 (TAEERKTFRQ…AHTVTDGLFA (79 aa)) is domain II. The flexible linker stretch occupies residues 144–147 (ASPA). Residues 147–194 (AADETEDIVSTLLALGYNEREAKAAVKGVPKGTDVGEGVRLALKNLLK) form a domain III region.

This sequence belongs to the RuvA family. As to quaternary structure, homotetramer. Forms an RuvA(8)-RuvB(12)-Holliday junction (HJ) complex. HJ DNA is sandwiched between 2 RuvA tetramers; dsDNA enters through RuvA and exits via RuvB. An RuvB hexamer assembles on each DNA strand where it exits the tetramer. Each RuvB hexamer is contacted by two RuvA subunits (via domain III) on 2 adjacent RuvB subunits; this complex drives branch migration. In the full resolvosome a probable DNA-RuvA(4)-RuvB(12)-RuvC(2) complex forms which resolves the HJ.

The protein localises to the cytoplasm. Its function is as follows. The RuvA-RuvB-RuvC complex processes Holliday junction (HJ) DNA during genetic recombination and DNA repair, while the RuvA-RuvB complex plays an important role in the rescue of blocked DNA replication forks via replication fork reversal (RFR). RuvA specifically binds to HJ cruciform DNA, conferring on it an open structure. The RuvB hexamer acts as an ATP-dependent pump, pulling dsDNA into and through the RuvAB complex. HJ branch migration allows RuvC to scan DNA until it finds its consensus sequence, where it cleaves and resolves the cruciform DNA. The protein is Holliday junction branch migration complex subunit RuvA of Neisseria gonorrhoeae (strain ATCC 700825 / FA 1090).